The sequence spans 354 residues: MLARLKKIQQKYQNLQQDLLQNQSISNKINIFKNLSKLEPIVELFQQYLTLEEQLTNITKALNQDQIEDKEILELAQKEKETLSQQKKVLWNQLRILLLPQDPEDQKNVILEIKGAVGGNEANLFAADLLRTYMKYAESKKWKVEILNLHPSIKGGLSSVELLISGQNIYSFLKYESGVHRVQRVPATEVQGRIHTSTAIVLVLPEAKEVEIKIDWNDIRTDTFNSSGPGGQSVNTTKSAVRLSHLPSGISVACQEGKSQHENKEKAFTLLKARIYNQILNAKQEAENKHRKSLVGTGDRSEKIRTYNYPQNRITDHRIGLTLQKLDIIMEGKLDFIIEPLIDATQKEKLVQSE.

Residue glutamine 232 is modified to N5-methylglutamine.

It belongs to the prokaryotic/mitochondrial release factor family. Post-translationally, methylated by PrmC. Methylation increases the termination efficiency of RF1.

Its subcellular location is the cytoplasm. Its function is as follows. Peptide chain release factor 1 directs the termination of translation in response to the peptide chain termination codons UAG and UAA. This Phytoplasma australiense protein is Peptide chain release factor 1.